Reading from the N-terminus, the 602-residue chain is Potassium voltage-gated channel subfamily A member 5 (602 aa).

A disordered region spans residues 1–107 (MEISLVPMEN…EDQAPQDSGS (107 aa)). The tract at residues 1–202 (MEISLVPMEN…FYQLGDEAME (202 aa)) is tetramerization domain. Topologically, residues 1–238 (MEISLVPMEN…LIFEYPESSG (238 aa)) are cytoplasmic. Pro residues predominate over residues 66–78 (PLPPMPQELPQPR). The residue at position 81 (Ser81) is a Phosphoserine; by CK2 and PKA. Lys212 participates in a covalent cross-link: Glycyl lysine isopeptide (Lys-Gly) (interchain with G-Cter in SUMO). A helical transmembrane segment spans residues 239-260 (SARAIAIVSVLVILISIITFCL). Residues 261 to 314 (ETLPEFRDERELLRHPPVPPQPPAPAPGANGSGSGVLSSGPTVAPLLPRTLADP) are Extracellular-facing. The disordered stretch occupies residues 274–297 (RHPPVPPQPPAPAPGANGSGSGVL). A compositionally biased stretch (pro residues) spans 276-286 (PPVPPQPPAPA). A glycan (N-linked (GlcNAc...) asparagine) is linked at Asn290. The helical transmembrane segment at 315–336 (FFIVETTCVIWFTFELLVRFFA) threads the bilayer. Cys337 is lipidated: S-palmitoyl cysteine. Topologically, residues 337–347 (CPSKAEFSRNI) are cytoplasmic. Residues 348-368 (MNIIDIVAIFPYFITLGTELA) traverse the membrane as a helical segment. Residues 369-384 (EQQPGGGGQNGQQAMS) lie on the Extracellular side of the membrane. The chain crosses the membrane as a helical; Voltage-sensor span at residues 385 to 405 (LAILRVIRLVRVFRIFKLSRH). Over 406–420 (SKGLQILGKTLQASM) the chain is Cytoplasmic. Residues 407-420 (KGLQILGKTLQASM) form an S4-S5 linker region. A helical membrane pass occupies residues 421–442 (RELGLLIFFLFIGVILFSSAVY). Topologically, residues 443-456 (FAEADNQGSHFSSI) are extracellular. Positions 457–468 (PDAFWWAVVTMT) form an intramembrane region, helical. Residues 469–474 (TVGYGD) carry the Selectivity filter motif. An intramembrane segment occupies 469-476 (TVGYGDMR). Residues 477-483 (PITVGGK) are Extracellular-facing. The chain crosses the membrane as a helical span at residues 484 to 512 (IVGSLCAIAGVLTIALPVPVIVSNFNYFY). Residues 513–602 (HRETDHEEQA…CLDTSRETDL (90 aa)) lie on the Cytoplasmic side of the membrane. A Glycyl lysine isopeptide (Lys-Gly) (interchain with G-Cter in SUMO) cross-link involves residue Lys525. Phosphoserine; by PKA is present on residues Ser535, Ser546, and Ser569. The PDZ-binding motif lies at 600–602 (TDL).

Belongs to the potassium channel family. A (Shaker) (TC 1.A.1.2) subfamily. Kv1.5/KCNA5 sub-subfamily. In terms of assembly, homotetramer and heterotetramer of potassium channel proteins. Interacts with DLG1, which enhances channel currents. Forms a ternary complex with DLG1 and CAV3. Interacts with KCNAB1. Interacts with UBE2I. Interacts with XIRP2; the interaction is required for normal action potential configuration in the heart. In terms of processing, glycosylated. Post-translationally, sumoylated on Lys-212, and Lys-525, preferentially with SUMO3. Sumoylation regulates the voltage sensitivity of the channel. In terms of tissue distribution, expressed in the heart (at protein level). Expressed in the brain and weakly expressed in the thymus, skeletal muscle and spleen.

Its subcellular location is the cell membrane. It catalyses the reaction K(+)(in) = K(+)(out). Functionally, voltage-gated potassium channel that mediates transmembrane potassium transport in excitable membranes. Forms tetrameric potassium-selective channels through which potassium ions pass in accordance with their electrochemical gradient. The channel alternates between opened and closed conformations in response to the voltage difference across the membrane. Can form functional homotetrameric channels and heterotetrameric channels that contain variable proportions of KCNA1, KCNA2, KCNA4, KCNA5, and possibly other family members as well; channel properties depend on the type of alpha subunits that are part of the channel. Channel properties are modulated by cytoplasmic beta subunits that regulate the subcellular location of the alpha subunits and promote rapid inactivation. Homotetrameric channels display rapid activation and slow inactivation. Required for normal electrical conduction including formation of the infranodal ventricular conduction system and normal action potential configuration, as a result of its interaction with XIRP2. May play a role in regulating the secretion of insulin in normal pancreatic islets. In terms of biological role, voltage-gated potassium channel that mediates transmembrane potassium transport in excitable membranes. Forms tetrameric potassium-selective channels through which potassium ions pass in accordance with their electrochemical gradient. The channel alternates between opened and closed conformations in response to the voltage difference across the membrane. Its function is as follows. Inactive. Inhibits expression of isoform 1 and isoform 2. The chain is Potassium voltage-gated channel subfamily A member 5 (Kcna5) from Mus musculus (Mouse).